Here is a 127-residue protein sequence, read N- to C-terminus: Large ribosomal subunit protein bL17 (127 aa).

Belongs to the bacterial ribosomal protein bL17 family. In terms of assembly, part of the 50S ribosomal subunit. Contacts protein L32.

The sequence is that of Large ribosomal subunit protein bL17 from Ligilactobacillus salivarius (strain UCC118) (Lactobacillus salivarius).